Consider the following 87-residue polypeptide: Small ribosomal subunit protein uS17 (87 aa).

This sequence belongs to the universal ribosomal protein uS17 family. Part of the 30S ribosomal subunit.

One of the primary rRNA binding proteins, it binds specifically to the 5'-end of 16S ribosomal RNA. The protein is Small ribosomal subunit protein uS17 of Bacillus pumilus (strain SAFR-032).